Consider the following 401-residue polypeptide: MAGATVTVEEVRKAQRATGPATVLAIGTATPANCVHQADYPDYYFRITKSEHMTELKEKFKRMCDKSQIRKRYMHLTEEYLAENPNMCAYMAPSLDARQDIVVVEVPKLGKAAAQKAIKEWGQPKSKITHLVFCTTSGVDMPGADYQLTKMLGLRPSVNRLMMYQQGCFAGGTVLRVAKDLAENNRGARVLVVCSEITAVTFRGPSESHLDSMVGQALFGDGAAAVIVGADPDERVERPLFQLVSASQRILPDSEGAIDGHLREVGLTFHLLKDVPGLISKNIERALEEAFKPLGITDYNSIFWVAHPGGPAILDQVEAKVGLEKERMRATRHVLSEYGNMSSACVLFILDEMRKRSAEDGQTTTGEGFDWGVLFGFGPGLTVETVVLHSVPITTGAAITA.

Residue C168 is part of the active site.

This sequence belongs to the thiolase-like superfamily. Chalcone/stilbene synthases family.

It carries out the reaction (E)-4-coumaroyl-CoA + 3 malonyl-CoA + 3 H(+) = 2',4,4',6'-tetrahydroxychalcone + 3 CO2 + 4 CoA. It functions in the pathway secondary metabolite biosynthesis; flavonoid biosynthesis. In terms of biological role, the primary product of this enzyme is 4,2',4',6'-tetrahydroxychalcone (also termed naringenin-chalcone or chalcone) which can under specific conditions spontaneously isomerize into naringenin. This chain is Chalcone synthase 1 (CHS1), found in Sorghum bicolor (Sorghum).